The sequence spans 103 residues: Interleukin-8 (103 aa).

An N-terminal signal peptide occupies residues methionine 1 to leucine 25. Arginine 27 is modified (citrulline). Disulfide bonds link cysteine 34-cysteine 61 and cysteine 36-cysteine 77.

Belongs to the intercrine alpha (chemokine CxC) family. As to quaternary structure, homodimer. Interacts with TNFAIP6 (via Link domain); this interaction interferes with chemokine binding to glycosaminoglycans. In terms of processing, citrullination at Arg-27 prevents proteolysis, and dampens tissue inflammation, it also enhances leukocytosis, possibly through impaired chemokine clearance from the blood circulation. Alveolar macrophages.

Its subcellular location is the secreted. Its function is as follows. Chemotactic factor that mediates inflammatory response by attracting neutrophils, basophils, and T-cells to clear pathogens and protect the host from infection. Also plays an important role in neutrophil activation. Released in response to an inflammatory stimulus, exerts its effect by binding to the G-protein-coupled receptors CXCR1 and CXCR2, primarily found in neutrophils, monocytes and endothelial cells. G-protein heterotrimer (alpha, beta, gamma subunits) constitutively binds to CXCR1/CXCR2 receptor and activation by IL8 leads to beta and gamma subunits release from Galpha (GNAI2 in neutrophils) and activation of several downstream signaling pathways including PI3K and MAPK pathways. The protein is Interleukin-8 (CXCL8) of Sus scrofa (Pig).